We begin with the raw amino-acid sequence, 399 residues long: Ribonucleoside-diphosphate reductase small chain 1 (399 aa).

S15, S24, and S41 each carry phosphoserine. Fe cation-binding residues include D145, E176, and H179. Y183 is a catalytic residue. E239, E273, and H276 together coordinate Fe cation.

Belongs to the ribonucleoside diphosphate reductase small chain family. As to quaternary structure, heterotetramer of two large (R1) and two small (R2) subunits. S.cerevisiae has two different R1 subunits (RNR1 and RNR3) and two different R2 subunits (RNR2 and RNR4). The functional form of the small subunits is a RNR2-RNR4 heterodimer, where RNR2 provides the iron-radical center and RNR4 is required for proper folding of RNR2 and assembly with the large subunits. Under normal growth conditions, the active form of the large subunits is a homodimer of the constitutively expressed RNR1. In damaged cells or cells arrested for DNA synthesis, the reductase consists of multiple species because of the association of the small subunits (RNR2-RNR4) with either the RNR1 homodimer or a heterodimer of RNR1 and the damage-inducible RNR3. Interacts with DIF1. Fe cation serves as cofactor.

It localises to the nucleus. The enzyme catalyses a 2'-deoxyribonucleoside 5'-diphosphate + [thioredoxin]-disulfide + H2O = a ribonucleoside 5'-diphosphate + [thioredoxin]-dithiol. Functionally, provides the precursors necessary for DNA synthesis. Catalyzes the biosynthesis of deoxyribonucleotides from the corresponding ribonucleotides. RNR2 provides the diiron-tyrosyl radical center. The polypeptide is Ribonucleoside-diphosphate reductase small chain 1 (RNR2) (Saccharomyces cerevisiae (strain ATCC 204508 / S288c) (Baker's yeast)).